A 120-amino-acid polypeptide reads, in one-letter code: Ribosome-binding factor A (120 aa).

The protein belongs to the RbfA family. Monomer. Binds 30S ribosomal subunits, but not 50S ribosomal subunits or 70S ribosomes.

It localises to the cytoplasm. Its function is as follows. One of several proteins that assist in the late maturation steps of the functional core of the 30S ribosomal subunit. Associates with free 30S ribosomal subunits (but not with 30S subunits that are part of 70S ribosomes or polysomes). Required for efficient processing of 16S rRNA. May interact with the 5'-terminal helix region of 16S rRNA. The protein is Ribosome-binding factor A of Borrelia garinii subsp. bavariensis (strain ATCC BAA-2496 / DSM 23469 / PBi) (Borreliella bavariensis).